We begin with the raw amino-acid sequence, 254 residues long: Low affinity immunoglobulin gamma Fc region receptor III-A (254 aa).

An N-terminal signal peptide occupies residues methionine 1–alanine 16. Topologically, residues glycine 17–glutamine 208 are extracellular. Ig-like C2-type domains are found at residues proline 24–histidine 105 and glycine 107–threonine 189. Residues cysteine 47 and cysteine 89 are joined by a disulfide bond. 3 N-linked (GlcNAc...) asparagine glycosylation sites follow: asparagine 56, asparagine 63, and asparagine 92. Cysteine 128 and cysteine 172 are joined by a disulfide. Residues asparagine 180 and asparagine 187 are each glycosylated (N-linked (GlcNAc...) asparagine). A helical membrane pass occupies residues valine 209–valine 229. Residues lysine 230–lysine 254 lie on the Cytoplasmic side of the membrane. The residue at position 236 (serine 236) is a Phosphoserine; by PKC. Position 237 is a phosphothreonine; by PKC (threonine 237).

In terms of assembly, forms a heterooligomeric complex with ITAM-containing signaling subunits, either a homodimer of CD247, a homodimer of FCER1G or a heterodimer of CD247 and FCER1G. Interacts (via transmembrane domain) with signaling subunits; this interaction is a prerequisite for receptor complex expression on the cell surface and intracellular signal transduction. Binds the Fc region of antigen-complexed IgG with a preference for IgG1 and IgG3 isotypes. Interacts with CD2; this interaction is involved in NK cell activation and cytotoxicity. Interacts with S100A4; this interaction inhibits PKC-dependent phosphorylation of FCGR3A. In terms of processing, glycosylated. Contains high mannose- and complex-type oligosaccharides. Glycosylation at Asn-180 is mandatory for high affinity binding to the Fc and for discrimination between fucosylated and afucosylated IgG glycoforms. Undergoes rapid ectodomain shedding upon NK cell stimulation. The soluble form is produced by a proteolytic cleavage mediated by ADAM17. Repeated stimulation causes receptor shedding, a mechanism that allows for increased NK cell motility and detachment from opsonized target cells while avoiding activation-induced NK cell apoptosis. Post-translationally, phosphorylated at RSSTR motif by PKC. The relevant physiological PKCs might be PRKCI, PRKCG, PRKCE, PRKCH and PRKCQ. As to expression, expressed in natural killer cells (at protein level). Expressed in a subset of circulating monocytes (at protein level).

The protein resides in the cell membrane. Its subcellular location is the secreted. Its function is as follows. Receptor for the invariable Fc fragment of immunoglobulin gamma (IgG). Optimally activated upon binding of clustered antigen-IgG complexes displayed on cell surfaces, triggers lysis of antibody-coated cells, a process known as antibody-dependent cellular cytotoxicity (ADCC). Does not bind free monomeric IgG, thus avoiding inappropriate effector cell activation in the absence of antigenic trigger. Mediates IgG effector functions on natural killer (NK) cells. Binds antigen-IgG complexes generated upon infection and triggers NK cell-dependent cytokine production and degranulation to limit viral load and propagation. Involved in the generation of memory-like adaptive NK cells capable to produce high amounts of IFNG and to efficiently eliminate virus-infected cells via ADCC. Regulates NK cell survival and proliferation, in particular by preventing NK cell progenitor apoptosis. Fc-binding subunit that associates with CD247 and/or FCER1G adapters to form functional signaling complexes. Following the engagement of antigen-IgG complexes, triggers phosphorylation of immunoreceptor tyrosine-based activation motif (ITAM)-containing adapters with subsequent activation of phosphatidylinositol 3-kinase signaling and sustained elevation of intracellular calcium that ultimately drive NK cell activation. The ITAM-dependent signaling coupled to receptor phosphorylation by PKC mediates robust intracellular calcium flux that leads to production of pro-inflammatory cytokines, whereas in the absence of receptor phosphorylation it mainly activates phosphatidylinositol 3-kinase signaling leading to cell degranulation. Costimulates NK cells and trigger lysis of target cells independently of IgG binding. Mediates the antitumor activities of therapeutic antibodies. Upon ligation on monocytes triggers TNFA-dependent ADCC of IgG-coated tumor cells. Mediates enhanced ADCC in response to afucosylated IgGs. In terms of biological role, (Microbial infection) Involved in Dengue virus pathogenesis via antibody-dependent enhancement (ADE) mechanism. Secondary infection with Dengue virus triggers elevated levels of afucosylated non-neutralizing IgG1s with reactivity to viral envelope/E protein. Viral antigen-IgG1 complexes bind with high affinity to FCGR3A, facilitating virus entry in myeloid cells and subsequent viral replication. The chain is Low affinity immunoglobulin gamma Fc region receptor III-A from Homo sapiens (Human).